A 352-amino-acid polypeptide reads, in one-letter code: MAGTICFIMWVLFITDTVWSRSVRQVYEVHDSDDWTIHDFECPMECFCPPSFPTALYCENRGLKEIPAIPSRIWYLYLQNNLIETIPEKPFENATQLRWINLNKNKITNYGIEKGALSQLKKLLFLFLEDNELEEVPSPLPRSLEQLQLARNKVSRIPQGTFSNLENLTLLDLQNNKLVDNAFQRDTFKGLKNLMQLNMAKNALRNMPPRLPANTMQLFLDNNSIEGIPENYFNVIPKVAFLRLNHNKLSDEGLPSRGFDVSSILDLQLSHNQLTKVPRISAHLQHLHLDHNKIKSVNVSVICPSPSMLPAERDSFSYGPHLRYLRLDGNEIKPPIPMALMTCFRLLQAVII.

The signal sequence occupies residues 1–20; it reads MAGTICFIMWVLFITDTVWS. The region spanning 33 to 71 is the LRRNT domain; sequence DDWTIHDFECPMECFCPPSFPTALYCENRGLKEIPAIPS. Intrachain disulfides connect Cys-42-Cys-48 and Cys-46-Cys-58. LRR repeat units lie at residues 72 to 93, 96 to 117, 122 to 142, 143 to 164, 167 to 180, 193 to 213, 214 to 235, 238 to 258, 263 to 282, and 283 to 304; these read RIWY…PFEN, QLRW…KGAL, KLLF…PLPR, SLEQ…TFSN, NLTL…KLVD, NLMQ…RLPA, NTMQ…YFNV, KVAF…PSRG, SILD…RISA, and HLQH…VICP. An N-linked (GlcNAc...) (keratan sulfate) asparagine glycan is attached at Asn-93. N-linked (GlcNAc...) (keratan sulfate) asparagine glycosylation is present at Asn-167. N-linked (GlcNAc...) asparagine glycosylation occurs at Asn-222. The N-linked (GlcNAc...) asparagine glycan is linked to Asn-298. A disulfide bridge links Cys-303 with Cys-343.

This sequence belongs to the small leucine-rich proteoglycan (SLRP) family. SLRP class II subfamily. In terms of processing, binds keratan sulfate chains. Cornea (at protein level). Increased expression in the stroma of keratoconus corneas. Also detected in trachea, and in low levels, in intestine, skeletal muscle, ovary, lung and putamen.

The protein resides in the secreted. It is found in the extracellular space. The protein localises to the extracellular matrix. In terms of biological role, may be important in developing and maintaining corneal transparency and for the structure of the stromal matrix. The polypeptide is Keratocan (KERA) (Homo sapiens (Human)).